The primary structure comprises 350 residues: tRNA uridine(34) hydroxylase (350 aa).

Residues 146-240 (DDPDAVFIDM…YARRAREQGL (95 aa)) enclose the Rhodanese domain. Cys200 serves as the catalytic Cysteine persulfide intermediate. The span at 319 to 328 (RRRRAGRENG) shows a compositional bias: basic and acidic residues. Positions 319–350 (RRRRAGRENGNKIFNKSRGRLNSKLSIPDPAE) are disordered.

Belongs to the TrhO family.

It carries out the reaction uridine(34) in tRNA + AH2 + O2 = 5-hydroxyuridine(34) in tRNA + A + H2O. Catalyzes oxygen-dependent 5-hydroxyuridine (ho5U) modification at position 34 in tRNAs. The chain is tRNA uridine(34) hydroxylase from Salmonella heidelberg (strain SL476).